The sequence spans 105 residues: uncharacterized protein (105 aa).

At serine 2 the chain carries N-acetylserine.

This is an uncharacterized protein from Saccharomyces cerevisiae (strain ATCC 204508 / S288c) (Baker's yeast).